Reading from the N-terminus, the 281-residue chain is Large ribosomal subunit protein uL2 (281 aa).

Positions 215 to 281 (LGRRPHTRGV…RRNNRKDSKK (67 aa)) are disordered. Over residues 258-269 (KTRDNKSTDKFI) the composition is skewed to basic and acidic residues. The segment covering 270–281 (VRRRNNRKDSKK) has biased composition (basic residues).

This sequence belongs to the universal ribosomal protein uL2 family. Part of the 50S ribosomal subunit. Forms a bridge to the 30S subunit in the 70S ribosome.

Functionally, one of the primary rRNA binding proteins. Required for association of the 30S and 50S subunits to form the 70S ribosome, for tRNA binding and peptide bond formation. It has been suggested to have peptidyltransferase activity; this is somewhat controversial. Makes several contacts with the 16S rRNA in the 70S ribosome. The polypeptide is Large ribosomal subunit protein uL2 (Pelagibacter ubique (strain HTCC1062)).